The following is a 129-amino-acid chain: Small ribosomal subunit protein uS11 (129 aa).

It belongs to the universal ribosomal protein uS11 family. As to quaternary structure, part of the 30S ribosomal subunit. Interacts with proteins S7 and S18. Binds to IF-3.

Located on the platform of the 30S subunit, it bridges several disparate RNA helices of the 16S rRNA. Forms part of the Shine-Dalgarno cleft in the 70S ribosome. The chain is Small ribosomal subunit protein uS11 from Escherichia fergusonii (strain ATCC 35469 / DSM 13698 / CCUG 18766 / IAM 14443 / JCM 21226 / LMG 7866 / NBRC 102419 / NCTC 12128 / CDC 0568-73).